The primary structure comprises 203 residues: Somatotropin (203 aa).

An N-terminal signal peptide occupies residues methionine 1 to serine 17. The residue at position 18 (glutamine 18) is a Pyrrolidone carboxylic acid. Histidine 35 contributes to the Zn(2+) binding site. Cysteine 68 and cysteine 176 are oxidised to a cystine. Glutamate 185 is a binding site for Zn(2+). Cysteine 193 and cysteine 201 are oxidised to a cystine.

The protein belongs to the somatotropin/prolactin family.

The protein localises to the secreted. Its function is as follows. Growth hormone plays an important role in growth control and is involved in the regulation of several anabolic processes. Implicated as an osmoregulatory substance important for seawater adaptation. This is Somatotropin (gh) from Solea senegalensis (Senegalese sole).